The sequence spans 259 residues: Hydroxyacylglutathione hydrolase (259 aa).

Positions 56, 58, 60, 61, 112, 133, and 171 each coordinate Zn(2+).

It belongs to the metallo-beta-lactamase superfamily. Glyoxalase II family. In terms of assembly, monomer. Zn(2+) serves as cofactor.

It catalyses the reaction an S-(2-hydroxyacyl)glutathione + H2O = a 2-hydroxy carboxylate + glutathione + H(+). It participates in secondary metabolite metabolism; methylglyoxal degradation; (R)-lactate from methylglyoxal: step 2/2. Thiolesterase that catalyzes the hydrolysis of S-D-lactoyl-glutathione to form glutathione and D-lactic acid. In Pseudomonas entomophila (strain L48), this protein is Hydroxyacylglutathione hydrolase.